The chain runs to 302 residues: Dermonecrotic toxin LiSicTox-alphaIA1bii (302 aa).

The signal sequence occupies residues 1–14 (ARVVLGCWSVLSQA). Residues 15-22 (AQTDDEER) constitute a propeptide that is removed on maturation. His-34 is an active-site residue. 2 residues coordinate Mg(2+): Glu-54 and Asp-56. His-70 serves as the catalytic Nucleophile. 2 cysteine pairs are disulfide-bonded: Cys-74-Cys-80 and Cys-76-Cys-219. Asp-114 provides a ligand contact to Mg(2+).

It belongs to the arthropod phospholipase D family. Class II subfamily. Class IIa sub-subfamily. Mg(2+) is required as a cofactor. Expressed by the venom gland.

The protein localises to the secreted. The enzyme catalyses an N-(acyl)-sphingosylphosphocholine = an N-(acyl)-sphingosyl-1,3-cyclic phosphate + choline. It catalyses the reaction an N-(acyl)-sphingosylphosphoethanolamine = an N-(acyl)-sphingosyl-1,3-cyclic phosphate + ethanolamine. It carries out the reaction a 1-acyl-sn-glycero-3-phosphocholine = a 1-acyl-sn-glycero-2,3-cyclic phosphate + choline. The catalysed reaction is a 1-acyl-sn-glycero-3-phosphoethanolamine = a 1-acyl-sn-glycero-2,3-cyclic phosphate + ethanolamine. Dermonecrotic toxins cleave the phosphodiester linkage between the phosphate and headgroup of certain phospholipids (sphingolipid and lysolipid substrates), forming an alcohol (often choline) and a cyclic phosphate. This toxin acts on sphingomyelin (SM). It may also act on ceramide phosphoethanolamine (CPE), lysophosphatidylcholine (LPC) and lysophosphatidylethanolamine (LPE), but not on lysophosphatidylserine (LPS), and lysophosphatidylglycerol (LPG). It acts by transphosphatidylation, releasing exclusively cyclic phosphate products as second products. Induces hemolysis, dermonecrosis, vascular permeability and platelet aggregation. This chain is Dermonecrotic toxin LiSicTox-alphaIA1bii, found in Loxosceles intermedia (Brown spider).